We begin with the raw amino-acid sequence, 276 residues long: Digeranylgeranylglyceryl phosphate synthase (276 aa).

The next 8 membrane-spanning stretches (helical) occupy residues Pro12–Pro34, Ile38–Phe60, Ala84–Leu104, Phe107–Leu127, Gly146–Val166, Val202–Val222, Val224–Leu244, and Gln256–Met276.

This sequence belongs to the UbiA prenyltransferase family. DGGGP synthase subfamily. Mg(2+) serves as cofactor.

Its subcellular location is the cell membrane. The enzyme catalyses sn-3-O-(geranylgeranyl)glycerol 1-phosphate + (2E,6E,10E)-geranylgeranyl diphosphate = 2,3-bis-O-(geranylgeranyl)-sn-glycerol 1-phosphate + diphosphate. The protein operates within membrane lipid metabolism; glycerophospholipid metabolism. Prenyltransferase that catalyzes the transfer of the geranylgeranyl moiety of geranylgeranyl diphosphate (GGPP) to the C2 hydroxyl of (S)-3-O-geranylgeranylglyceryl phosphate (GGGP). This reaction is the second ether-bond-formation step in the biosynthesis of archaeal membrane lipids. This chain is Digeranylgeranylglyceryl phosphate synthase, found in Thermococcus gammatolerans (strain DSM 15229 / JCM 11827 / EJ3).